The primary structure comprises 289 residues: Alpha-soluble NSF attachment protein (289 aa).

The stretch at 112-145 (GKYYKEIAELYELEQNFEQAIIYFEKAADIYQSE) is one TPR repeat.

It belongs to the SNAP family.

The protein resides in the membrane. Its function is as follows. Required for vesicular transport between the endoplasmic reticulum and the Golgi apparatus. The chain is Alpha-soluble NSF attachment protein from Vitis vinifera (Grape).